Consider the following 914-residue polypeptide: Alanine--tRNA ligase (914 aa).

Histidine 613, histidine 617, cysteine 717, and histidine 721 together coordinate Zn(2+).

Belongs to the class-II aminoacyl-tRNA synthetase family. Zn(2+) is required as a cofactor.

It localises to the cytoplasm. It catalyses the reaction tRNA(Ala) + L-alanine + ATP = L-alanyl-tRNA(Ala) + AMP + diphosphate. Functionally, catalyzes the attachment of alanine to tRNA(Ala) in a two-step reaction: alanine is first activated by ATP to form Ala-AMP and then transferred to the acceptor end of tRNA(Ala). Also edits incorrectly charged Ser-tRNA(Ala) and Gly-tRNA(Ala) via its editing domain. The polypeptide is Alanine--tRNA ligase (Pyrococcus abyssi (strain GE5 / Orsay)).